A 200-amino-acid polypeptide reads, in one-letter code: Somatotropin (200 aa).

Residues 1–22 (MARVLVLLSVVVASLLFSQGAT) form the signal peptide. His38 is a Zn(2+) binding site. Cys71 and Cys173 form a disulfide bridge. Position 182 (Glu182) interacts with Zn(2+). Cys190 and Cys198 are joined by a disulfide.

Belongs to the somatotropin/prolactin family.

It localises to the secreted. In terms of biological role, growth hormone plays an important role in growth control and is involved in the regulation of several anabolic processes. Implicated as an osmoregulatory substance important for seawater adaptation. This is Somatotropin (gh) from Ictalurus punctatus (Channel catfish).